Here is a 65-residue protein sequence, read N- to C-terminus: Gallinacin-1 alpha (65 aa).

The N-terminal stretch at 1–19 is a signal peptide; that stretch reads MRIVYLLLPFILLLAQGAA. A propeptide spanning residues 20–25 is cleaved from the precursor; it reads GSSQAL. 3 disulfides stabilise this stretch: C31–C59, C38–C53, and C43–C60.

Belongs to the beta-defensin family.

It localises to the secreted. The protein localises to the cytoplasmic granule. In terms of biological role, has bactericidal activity. Potent activity against E.coli ML-35, L.monocytogenes EGD and C.albicans. This Gallus gallus (Chicken) protein is Gallinacin-1 alpha.